A 336-amino-acid chain; its full sequence is Phosphate acyltransferase (336 aa).

It belongs to the PlsX family. In terms of assembly, homodimer. Probably interacts with PlsY.

It is found in the cytoplasm. The catalysed reaction is a fatty acyl-[ACP] + phosphate = an acyl phosphate + holo-[ACP]. It functions in the pathway lipid metabolism; phospholipid metabolism. Its function is as follows. Catalyzes the reversible formation of acyl-phosphate (acyl-PO(4)) from acyl-[acyl-carrier-protein] (acyl-ACP). This enzyme utilizes acyl-ACP as fatty acyl donor, but not acyl-CoA. The polypeptide is Phosphate acyltransferase (Dictyoglomus thermophilum (strain ATCC 35947 / DSM 3960 / H-6-12)).